The chain runs to 359 residues: Insulin gene enhancer protein isl-2a (359 aa).

2 LIM zinc-binding domains span residues 27-80 and 30-143; these read CVGC…CKRD and CGSQ…RADH. Positions 171 to 190 are disordered; it reads EPVPVRQPPHRNHVHKQSEK. Residues 191 to 250 constitute a DNA-binding region (homeobox); sequence TTRVRTVLNEKQLHTLRTCYNANPRPDALMKEQLVEMTGLSPRVIRVWFQNKRCKDKKKS. Positions 326–336 are enriched in low complexity; it reads ESGSLGNSSGS. The segment at 326–359 is disordered; that stretch reads ESGSLGNSSGSDVTSLSSQLPDTPNSMVPSPVET. Over residues 337–359 the composition is skewed to polar residues; that stretch reads DVTSLSSQLPDTPNSMVPSPVET.

It is found in the nucleus. Functionally, binds to one of the cis-acting domain of the insulin gene enhancer. May be involved in subtype specialization of primary motoneurons. In Danio rerio (Zebrafish), this protein is Insulin gene enhancer protein isl-2a (isl2a).